Here is a 378-residue protein sequence, read N- to C-terminus: Probable serine/threonine-protein kinase PBL7 (378 aa).

A disordered region spans residues 1–49 (MGWIPCSGKSSGRNKTRRNGDHKLDRKSSDCSVSTSEKSRAKSSLSESK). Residue Gly-2 is the site of N-myristoyl glycine attachment. The segment covering 18-29 (RNGDHKLDRKSS) has biased composition (basic and acidic residues). Residues 32-47 (SVSTSEKSRAKSSLSE) are compositionally biased toward low complexity. Thr-62 is subject to Phosphothreonine. Residues 73–350 (FRKECLIGEG…ADVVTALSYL (278 aa)) form the Protein kinase domain. Residues 79 to 87 (IGEGGFGRV) and Lys-102 each bind ATP. At Tyr-147 the chain carries Phosphotyrosine. Asp-200 functions as the Proton acceptor in the catalytic mechanism. A phosphoserine mark is found at Ser-204 and Ser-234. A phosphothreonine mark is found at Thr-235 and Thr-240. Tyr-248 is modified (phosphotyrosine).

This sequence belongs to the protein kinase superfamily. Ser/Thr protein kinase family. As to quaternary structure, interacts with BSU1 and BSL1. Post-translationally, phosphorylated at Ser-43, Ser-46 and Ser-234. As to expression, widely expressed.

It localises to the cell membrane. It carries out the reaction L-seryl-[protein] + ATP = O-phospho-L-seryl-[protein] + ADP + H(+). It catalyses the reaction L-threonyl-[protein] + ATP = O-phospho-L-threonyl-[protein] + ADP + H(+). Functionally, serine/threonine-protein kinase involved in the positive regulation of brassinosteroid (BR) signaling and plant growth. Phosphorylates both BSU1 and BSL1 in vitro. This Arabidopsis thaliana (Mouse-ear cress) protein is Probable serine/threonine-protein kinase PBL7.